Reading from the N-terminus, the 141-residue chain is Hemoglobin subunit alpha (141 aa).

Residues 1-141 (VLSPADKTNV…VSTVLTSKYR (141 aa)) enclose the Globin domain. The residue at position 3 (Ser3) is a Phosphoserine. N6-succinyllysine is present on Lys7. A Phosphothreonine modification is found at Thr8. Residue Lys11 is modified to N6-succinyllysine. The residue at position 16 (Lys16) is an N6-acetyllysine; alternate. Position 16 is an N6-succinyllysine; alternate (Lys16). Tyr24 carries the phosphotyrosine modification. Ser35 bears the Phosphoserine mark. Lys40 is modified (N6-succinyllysine). Ser49 carries the post-translational modification Phosphoserine. His58 contacts O2. Residue His87 coordinates heme b. Ser102 bears the Phosphoserine mark. Residue Thr108 is modified to Phosphothreonine. Position 124 is a phosphoserine (Ser124). Residues Thr134 and Thr137 each carry the phosphothreonine modification. Residue Ser138 is modified to Phosphoserine.

Belongs to the globin family. Heterotetramer of two alpha chains and two beta chains. As to expression, red blood cells.

Functionally, involved in oxygen transport from the lung to the various peripheral tissues. This chain is Hemoglobin subunit alpha, found in Tamias merriami (Merriam's chipmunk).